The sequence spans 378 residues: Biotin synthase, mitochondrial (378 aa).

The N-terminal 26 residues, Met-1–Tyr-26, are a transit peptide targeting the mitochondrion. Residues Arg-79–Arg-308 form the Radical SAM core domain. Residues Cys-94, Cys-98, and Cys-101 each contribute to the [4Fe-4S] cluster site. Positions 138, 171, 231, and 303 each coordinate [2Fe-2S] cluster. Residues Pro-357 to His-378 form a disordered region.

This sequence belongs to the radical SAM superfamily. Biotin synthase family. [4Fe-4S] cluster serves as cofactor. It depends on [2Fe-2S] cluster as a cofactor.

It is found in the mitochondrion. The catalysed reaction is (4R,5S)-dethiobiotin + (sulfur carrier)-SH + 2 reduced [2Fe-2S]-[ferredoxin] + 2 S-adenosyl-L-methionine = (sulfur carrier)-H + biotin + 2 5'-deoxyadenosine + 2 L-methionine + 2 oxidized [2Fe-2S]-[ferredoxin]. Its pathway is cofactor biosynthesis; biotin biosynthesis; biotin from 7,8-diaminononanoate: step 2/2. This chain is Biotin synthase, mitochondrial (BIO2), found in Arabidopsis thaliana (Mouse-ear cress).